The sequence spans 420 residues: F-box/LRR-repeat protein At2g43260 (420 aa).

The F-box domain maps to 7–53; that stretch reads NPNSIDILPELLEEVLLRLPTKSILKCRIVSKQWRSLLESSRFAERH. LRR repeat units follow at residues 112-135 and 226-251; these read QDWI…LNHN and VYRI…QITV.

This Arabidopsis thaliana (Mouse-ear cress) protein is F-box/LRR-repeat protein At2g43260.